The chain runs to 117 residues: UPF0102 protein Rsph17025_0472 (117 aa).

It belongs to the UPF0102 family.

This chain is UPF0102 protein Rsph17025_0472, found in Cereibacter sphaeroides (strain ATCC 17025 / ATH 2.4.3) (Rhodobacter sphaeroides).